The sequence spans 93 residues: uncharacterized protein (93 aa).

The next 2 membrane-spanning stretches (helical) occupy residues 7 to 27 and 70 to 90; these read LIFL…LGMI and ILSV…AFGI.

It is found in the cell membrane. This is an uncharacterized protein from Methanocaldococcus jannaschii (strain ATCC 43067 / DSM 2661 / JAL-1 / JCM 10045 / NBRC 100440) (Methanococcus jannaschii).